The following is a 714-amino-acid chain: T-cell activation Rho GTPase-activating protein (714 aa).

In terms of domain architecture, Rho-GAP spans 88-277 (QPLSIICGEN…FLIDNCFEIF (190 aa)). Disordered regions lie at residues 290-357 (DDSL…ESSV), 370-419 (QDRR…AEDP), 451-508 (QGHI…HSMS), 520-563 (RTSS…QSQT), and 623-650 (KPSTAVPPVPSHHGGDLSEGTPGGHRLS). The span at 299–311 (SDVSTLQNDSAYD) shows a compositional bias: polar residues. The residue at position 398 (Ser398) is a Phosphoserine. Over residues 459–471 (SRSSPGESLGSSP) the composition is skewed to low complexity. 2 stretches are compositionally biased toward basic and acidic residues: residues 492 to 501 (KTDKTKPQRE) and 527 to 545 (EKSKDFSRDQLQKDLRKES).

As to expression, highly expressed in testis.

May function as a GTPase-activating protein. May play a role in transmission ratio distortion (TRD) in mouse, in which heterozygous males for t-locus transmit their t-carrying chromosome to 95% or more of their offspring. The sequence is that of T-cell activation Rho GTPase-activating protein (Tagap) from Mus musculus (Mouse).